Reading from the N-terminus, the 375-residue chain is MFNIIKNDKNSNARIGVLELPHGKVTTPCFMPVGTLGVMKALKHDVLEKLGCNLMLANTYHLYLRPGIDVIKEYGSLHNFTTWNKNFLTDSGGFQVFSLSNFRKIETEGVDFKSHIDGSRHYFTPESVFKMQEIFESDIIMALDICSSYGIDYSEASLYANITTSWARRTLRAYENRKEGYDGFLFLITQGNFFKDLRKRSTEAILELNSPGIAIGGISVGEPRDKYLEILEYNSSLIPKDKPKYVMGIGTPHYILDAIYYGIDIFDCVNPTRIARHGSLLTDNGILRIKRAGFNVDTSPIEQDCSCTLCTRYSRGYLRHLIKSGETLGVMLASEHNIHYMFRLIQKARNAIMNDDFTQFRKLYLSKYDEGNFNE.

The active-site Proton acceptor is the aspartate 90. Substrate-binding positions include 90–94 (DSGGF), aspartate 144, glutamine 190, and glycine 217. The tract at residues 248-254 (GIGTPHY) is RNA binding. Aspartate 267 serves as the catalytic Nucleophile. The RNA binding; important for wobble base 34 recognition stretch occupies residues 272–276 (TRIAR). Zn(2+) is bound by residues cysteine 305, cysteine 307, cysteine 310, and histidine 336.

This sequence belongs to the queuine tRNA-ribosyltransferase family. Homodimer. Within each dimer, one monomer is responsible for RNA recognition and catalysis, while the other monomer binds to the replacement base PreQ1. Zn(2+) serves as cofactor.

It carries out the reaction 7-aminomethyl-7-carbaguanine + guanosine(34) in tRNA = 7-aminomethyl-7-carbaguanosine(34) in tRNA + guanine. It functions in the pathway tRNA modification; tRNA-queuosine biosynthesis. Its function is as follows. Catalyzes the base-exchange of a guanine (G) residue with the queuine precursor 7-aminomethyl-7-deazaguanine (PreQ1) at position 34 (anticodon wobble position) in tRNAs with GU(N) anticodons (tRNA-Asp, -Asn, -His and -Tyr). Catalysis occurs through a double-displacement mechanism. The nucleophile active site attacks the C1' of nucleotide 34 to detach the guanine base from the RNA, forming a covalent enzyme-RNA intermediate. The proton acceptor active site deprotonates the incoming PreQ1, allowing a nucleophilic attack on the C1' of the ribose to form the product. After dissociation, two additional enzymatic reactions on the tRNA convert PreQ1 to queuine (Q), resulting in the hypermodified nucleoside queuosine (7-(((4,5-cis-dihydroxy-2-cyclopenten-1-yl)amino)methyl)-7-deazaguanosine). This chain is Queuine tRNA-ribosyltransferase, found in Borrelia hermsii (strain HS1 / DAH).